The sequence spans 374 residues: Very late expression factor 1 (374 aa).

Residues 169 to 349 (AIDTILNFID…NFDESSSDEE (181 aa)) enclose the Tyr recombinase domain. Active-site residues include Arg210, Lys239, Arg303, and His326. The segment at 328-374 (SPASTKPYLNKYNFDESSSDEESGGNNRDSSTGSSANSSSLYYQTGD) is disordered. Tyr335 serves as the catalytic O-(3'-phospho-DNA)-tyrosine intermediate. The span at 357 to 367 (SSTGSSANSSS) shows a compositional bias: low complexity.

Belongs to the 'phage' integrase family.

Its function is as follows. Involved in very late gene activation. This is Very late expression factor 1 (VLF-1) from Orgyia pseudotsugata (Douglas-fir tussock moth).